The sequence spans 612 residues: uncharacterized protein (612 aa).

The segment at residues 6 to 32 is a DNA-binding region (zn(2)-C6 fungal-type); the sequence is CLYCRRRKIKCDKNRPCHNCFVAKREC.

Its subcellular location is the cytoplasm. The protein resides in the nucleus. This is an uncharacterized protein from Schizosaccharomyces pombe (strain 972 / ATCC 24843) (Fission yeast).